We begin with the raw amino-acid sequence, 312 residues long: Ribosomal protein L11 methyltransferase (312 aa).

The S-adenosyl-L-methionine site is built by Thr-160, Gly-181, Asp-203, and Asn-246.

This sequence belongs to the methyltransferase superfamily. PrmA family.

The protein resides in the cytoplasm. The enzyme catalyses L-lysyl-[protein] + 3 S-adenosyl-L-methionine = N(6),N(6),N(6)-trimethyl-L-lysyl-[protein] + 3 S-adenosyl-L-homocysteine + 3 H(+). Methylates ribosomal protein L11. The polypeptide is Ribosomal protein L11 methyltransferase (Staphylococcus haemolyticus (strain JCSC1435)).